A 177-amino-acid polypeptide reads, in one-letter code: MPLILGVDPGSRKMGYGIINATGSRLGYVASGVVRIPQPLLVADCLAERLKVIFDSLSEIIEQYQPQEFAIENVFMAKSAGSALKLGQARGAAIVAAVNKDLPVSEYEARKVKQAVVGTGAADKLQVQHMVCTLLKLSKAPAEDAADALAVAICHANSQQNLIRMAGARRYRRGRTV.

Active-site residues include Asp-8, Glu-72, and Asp-144. The Mg(2+) site is built by Asp-8, Glu-72, and Asp-144.

The protein belongs to the RuvC family. Homodimer which binds Holliday junction (HJ) DNA. The HJ becomes 2-fold symmetrical on binding to RuvC with unstacked arms; it has a different conformation from HJ DNA in complex with RuvA. In the full resolvosome a probable DNA-RuvA(4)-RuvB(12)-RuvC(2) complex forms which resolves the HJ. Mg(2+) serves as cofactor.

Its subcellular location is the cytoplasm. It carries out the reaction Endonucleolytic cleavage at a junction such as a reciprocal single-stranded crossover between two homologous DNA duplexes (Holliday junction).. Functionally, the RuvA-RuvB-RuvC complex processes Holliday junction (HJ) DNA during genetic recombination and DNA repair. Endonuclease that resolves HJ intermediates. Cleaves cruciform DNA by making single-stranded nicks across the HJ at symmetrical positions within the homologous arms, yielding a 5'-phosphate and a 3'-hydroxyl group; requires a central core of homology in the junction. The consensus cleavage sequence is 5'-(A/T)TT(C/G)-3'. Cleavage occurs on the 3'-side of the TT dinucleotide at the point of strand exchange. HJ branch migration catalyzed by RuvA-RuvB allows RuvC to scan DNA until it finds its consensus sequence, where it cleaves and resolves the cruciform DNA. The protein is Crossover junction endodeoxyribonuclease RuvC of Teredinibacter turnerae (strain ATCC 39867 / T7901).